We begin with the raw amino-acid sequence, 186 residues long: Protein YABBY 2 (186 aa).

Residues 17-44 (CNFCNTIFAVSVPSNSMLNIVTVRCGHC) form a C4-type zinc finger.

The protein belongs to the YABBY family. Expressed in leaf blades, leaf sheaths and flowers.

The protein localises to the nucleus. The chain is Protein YABBY 2 (YAB2) from Oryza sativa subsp. japonica (Rice).